A 199-amino-acid polypeptide reads, in one-letter code: N-(5'-phosphoribosyl)anthranilate isomerase (199 aa).

It belongs to the TrpF family.

The enzyme catalyses N-(5-phospho-beta-D-ribosyl)anthranilate = 1-(2-carboxyphenylamino)-1-deoxy-D-ribulose 5-phosphate. It participates in amino-acid biosynthesis; L-tryptophan biosynthesis; L-tryptophan from chorismate: step 3/5. This is N-(5'-phosphoribosyl)anthranilate isomerase from Streptococcus pneumoniae (strain Hungary19A-6).